We begin with the raw amino-acid sequence, 834 residues long: Translation initiation factor IF-2 (834 aa).

Residues 1–247 form a disordered region; sequence MTEEKKFSGS…STPATVRKEQ (247 aa). Positions 45–101 are enriched in low complexity; the sequence is GGSRPSRPARPNNNNQNRPNNGGQSQNRNNQNRSNTSTGGQNRSNNGGNRNNRPGSR. The span at 109 to 125 shows a compositional bias: basic and acidic residues; the sequence is PMIREKKNWSTKPREGQ. Low complexity-rich tracts occupy residues 149 to 165 and 173 to 201; these read ASAA…ATKP and ATKP…SARN. Residues 224-233 show a composition bias toward basic residues; sequence GSKKSRRIAA. The 170-residue stretch at 335–504 folds into the tr-type G domain; it reads SRPPVVTIMG…LLQAEVLELK (170 aa). Positions 344-351 are G1; it reads GHVDHGKT. A GTP-binding site is contributed by 344-351; sequence GHVDHGKT. Residues 369 to 373 are G2; that stretch reads GITQH. The tract at residues 390 to 393 is G3; the sequence is DTPG. Residues 390–394 and 444–447 each bind GTP; these read DTPGH and NKID. Residues 444-447 are G4; that stretch reads NKID. The segment at 480–482 is G5; sequence SAK.

Belongs to the TRAFAC class translation factor GTPase superfamily. Classic translation factor GTPase family. IF-2 subfamily.

It is found in the cytoplasm. In terms of biological role, one of the essential components for the initiation of protein synthesis. Protects formylmethionyl-tRNA from spontaneous hydrolysis and promotes its binding to the 30S ribosomal subunits. Also involved in the hydrolysis of GTP during the formation of the 70S ribosomal complex. This is Translation initiation factor IF-2 from Leuconostoc mesenteroides subsp. mesenteroides (strain ATCC 8293 / DSM 20343 / BCRC 11652 / CCM 1803 / JCM 6124 / NCDO 523 / NBRC 100496 / NCIMB 8023 / NCTC 12954 / NRRL B-1118 / 37Y).